The following is a 949-amino-acid chain: MAM domain-containing glycosylphosphatidylinositol anchor protein 2 (949 aa).

The N-terminal stretch at 1–25 is a signal peptide; the sequence is MDLVYGLVWLLTVLLEGISGQGVYA. 2 Ig-like domains span residues 27 to 127 and 134 to 232; these read PTVR…IRVD and PVVT…KMVS. Disulfide bonds link Cys62-Cys110 and Cys159-Cys216. N-linked (GlcNAc...) asparagine glycosylation is found at Asn92, Asn213, and Asn237. Ig-like domains are found at residues 242–328, 340–436, 442–533, and 540–627; these read PSIK…NIIV, PDPY…VNIS, PNLT…ALVQ, and PAVE…FLVT. Intrachain disulfides connect Cys264–Cys310 and Cys359–Cys417. Asn434, Asn443, Asn504, Asn610, and Asn703 each carry an N-linked (GlcNAc...) asparagine glycan. 2 cysteine pairs are disulfide-bonded: Cys465-Cys515 and Cys561-Cys611. Residues 638–738 enclose the Fibronectin type-III domain; the sequence is DTYNPVWQNR…TIRVIKYTGE (101 aa). In terms of domain architecture, MAM spans 739 to 914; sequence FHCGFEDGNI…VSIAEGECAK (176 aa). The GPI-anchor amidated aspartate moiety is linked to residue Asp924. The propeptide at 925–949 is removed in mature form; sequence GAVGILVHIWLFPVIILISILSPRR.

In terms of assembly, interacts (through the Ig-like domains) with NLGN2. Expressed predominantly in neuronal tissue. Expressed in brain.

It is found in the cell membrane. Its function is as follows. May be involved in cell-cell interactions. This Rattus norvegicus (Rat) protein is MAM domain-containing glycosylphosphatidylinositol anchor protein 2 (Mdga2).